We begin with the raw amino-acid sequence, 833 residues long: Transcription factor MBP1 (833 aa).

The region spanning 5 to 111 is the HTH APSES-type domain; that stretch reads IYSARYSGVD…FTQTDGSASP (107 aa). Residues 36–57 constitute a DNA-binding region (H-T-H motif); sequence ATHILKAANFAKAKRTRILEKE. Disordered stretches follow at residues 104 to 223 and 280 to 329; these read QTDG…QSPT and QQSS…SPII. Ser-110 is subject to Phosphoserine. Positions 115-129 are enriched in basic residues; that stretch reads PKHHHASKVDRKKAI. Residues 139–149 are compositionally biased toward basic and acidic residues; that stretch reads ETKRNNKKAEE. Polar residues predominate over residues 201–223; that stretch reads PNSSISTTQLPSIRSTMGPQSPT. Over residues 280–307 the composition is skewed to low complexity; sequence QQSSLIQTQQTESMATSVSSSPSLPTSP. A Phosphothreonine modification is found at Thr-325. 2 positions are modified to phosphoserine: Ser-326 and Ser-330. ANK repeat units follow at residues 394-423 and 512-541; these read ELHTAFHWACSMGNLPIAEALYEAGTSIRS and NGDTALHIASKNGDVVFFNTLVKMGALTTI. The residue at position 827 (Ser-827) is a Phosphoserine.

Component of the transcription complex MCB-binding factor (MBF) composed of SWI6 and MBP1. Interacts with MSA1.

The protein localises to the nucleus. Binds to MCB elements (Mlu I cell cycle box) found in the promoter of most DNA synthesis genes. Transcriptional activation by MBF has an important role in the transition from G1 to S phase. It may have a dual role in that it behaves as an activator of transcription at the G1-S boundary and as a repressor during other stages of the cell cycle. The chain is Transcription factor MBP1 (MBP1) from Saccharomyces cerevisiae (strain ATCC 204508 / S288c) (Baker's yeast).